The chain runs to 422 residues: Transcription initiation factor TFIID subunit 15b (422 aa).

4 disordered regions span residues 1–24 (MAGM…DGYG), 47–94 (YGGR…PNPS), 111–263 (ALAP…DAAT), and 368–422 (MAEK…SRPY). Gly residues-rich tracts occupy residues 8-24 (DGGG…DGYG) and 47-83 (YGGR…GGGG). The RanBP2-type zinc-finger motif lies at 84-115 (RDGDWRCPNPSCGNVNFARRVECNKCGALAPS). The segment covering 123 to 133 (DRGGGGYSRGG) has biased composition (gly residues). Positions 134–156 (GDSDRGGGRGGRNDSGRSYESSR) are enriched in basic and acidic residues. Gly residues-rich tracts occupy residues 219–229 (PSYGGPRGGYG) and 236–247 (GGRGGRSGGYDG). Residues 252–263 (RRQEASYEDAAT) show a composition bias toward basic and acidic residues. The RRM domain occupies 280 to 371 (ARIYISNLPP…NKISVTMAEK (92 aa)). The span at 382 to 397 (RGGGRGGGGGGYGGGG) shows a compositional bias: gly residues.

Belongs to the TAF15 family. In terms of assembly, component of the TFIID complex. TFIID is composed of TATA binding protein (TBP) and a number of TBP-associated factors (TAFs) whose MWs range from 14-217 kDa. Interacts with TAF4, TAF4B, TAF5, TAF12B and TAF14. Expressed in roots, leaves and inflorescences.

It localises to the nucleus. Its function is as follows. TAFs are components of the transcription factor IID (TFIID) complex that is essential for mediating regulation of RNA polymerase transcription. The protein is Transcription initiation factor TFIID subunit 15b (TAF15B) of Arabidopsis thaliana (Mouse-ear cress).